Consider the following 383-residue polypeptide: GDSL esterase/lipase At1g28610 (383 aa).

Residues 1-22 (MASLDSLVSFFLSTLFVTIVSS) form the signal peptide. The active-site Nucleophile is the serine 38. N-linked (GlcNAc...) asparagine glycans are attached at residues asparagine 134, asparagine 184, and asparagine 315. Catalysis depends on residues aspartate 340 and histidine 343.

Belongs to the 'GDSL' lipolytic enzyme family.

The protein localises to the secreted. The chain is GDSL esterase/lipase At1g28610 from Arabidopsis thaliana (Mouse-ear cress).